The primary structure comprises 139 residues: Maximins 4/H3 type 6 (139 aa).

Residues 1-18 (MNFKYIVAVSFLIASAYA) form the signal peptide. A propeptide spanning residues 19–43 (RSVQNDEQSLSQRDVLEEESLREIR) is cleaved from the precursor. Asparagine amide is present on asparagine 70. A propeptide spanning residues 74 to 118 (TAEDHEVMKRLEAVMRDLDSLDHPEEASERETRGFNQDEIAKEKR) is cleaved from the precursor. Isoleucine 138 bears the Isoleucine amide mark.

It belongs to the bombinin family. In terms of tissue distribution, expressed by the skin glands.

The protein resides in the secreted. Its function is as follows. Maximin-4 shows antibacterial activity against both Gram-positive and Gram-negative bacteria. It also shows antimicrobial activity against the fungus C.albicans, but not against A.flavus nor P.uticale. It has little hemolytic activity. It does not possess a significant cytotoxicity against tumor cell lines. It does not possess a significant anti-HIV activity. Maximin-H3 shows antibacterial activity against both Gram-positive and Gram-negative bacteria. It also shows antimicrobial activity against the fungus C.albicans. Shows strong hemolytic activity. In Bombina maxima (Giant fire-bellied toad), this protein is Maximins 4/H3 type 6.